The chain runs to 880 residues: Replication origin-binding protein (880 aa).

Positions 60–225 constitute a Helicase ATP-binding domain; it reads PLPIRTKPVL…AELRGAENVH (166 aa). An ATP-binding site is contributed by 73–80; it reads APMGSGKT. Residues 260-287 form a disordered region; that stretch reads PPAGDESREASASQPPPHDSSNEPCAPE.

This sequence belongs to the herpesviridae OriBP family. As to quaternary structure, homodimer. Interacts with the major DNA-binding protein. Interacts with the DNA helicase/primase complex-associated protein and the polymerase accessory protein.

Its subcellular location is the host nucleus. In terms of biological role, functions as a docking protein to recruit essential components of the viral replication machinery to viral DNA origins. In the presence of the major DNA-binding protein, opens dsDNA leading to a conformational change in the origin that facilitates DNA unwinding and subsequent replication. The sequence is that of Replication origin-binding protein (UL9) from Psittacid herpesvirus 1 (isolate Amazon parrot/-/97-0001/1997) (PsHV-1).